The primary structure comprises 144 residues: Ribonuclease VapC37 (144 aa).

In terms of domain architecture, PINc spans 3-137 (IVDANVLLYA…DFGRFEGVRW (135 aa)). Positions 5 and 90 each coordinate Mg(2+).

This sequence belongs to the PINc/VapC protein family. It depends on Mg(2+) as a cofactor.

It is found in the secreted. Its function is as follows. Probable toxic component of a type II toxin-antitoxin (TA) system. An RNase. Upon expression in M.smegmatis inhibits colony formation. The putative cognate antitoxin is VapB37. The chain is Ribonuclease VapC37 from Mycobacterium tuberculosis (strain ATCC 25618 / H37Rv).